The chain runs to 175 residues: uncharacterized protein (175 aa).

A coiled-coil region spans residues 107–138; that stretch reads KTEEEAEKTLQEIERKIFKKLWENLDKERKRE.

This is an uncharacterized protein from Aquifex aeolicus (strain VF5).